A 353-amino-acid polypeptide reads, in one-letter code: tRNA-cytidine(32) 2-sulfurtransferase (353 aa).

The PP-loop motif motif lies at 49-54 (SGGKDS). 3 residues coordinate [4Fe-4S] cluster: Cys-124, Cys-127, and Cys-215.

It belongs to the TtcA family. As to quaternary structure, homodimer. Requires Mg(2+) as cofactor. It depends on [4Fe-4S] cluster as a cofactor.

The protein resides in the cytoplasm. It catalyses the reaction cytidine(32) in tRNA + S-sulfanyl-L-cysteinyl-[cysteine desulfurase] + AH2 + ATP = 2-thiocytidine(32) in tRNA + L-cysteinyl-[cysteine desulfurase] + A + AMP + diphosphate + H(+). It functions in the pathway tRNA modification. In terms of biological role, catalyzes the ATP-dependent 2-thiolation of cytidine in position 32 of tRNA, to form 2-thiocytidine (s(2)C32). The sulfur atoms are provided by the cysteine/cysteine desulfurase (IscS) system. In Sodalis glossinidius (strain morsitans), this protein is tRNA-cytidine(32) 2-sulfurtransferase.